A 387-amino-acid polypeptide reads, in one-letter code: Penicillopepsin-1 (387 aa).

The first 19 residues, 1–19 (MVNSKTVVSALALSALAAA), serve as a signal peptide directing secretion. The propeptide at 20-66 (APAPSSTTSFSINQVAVKKPAIHPAVKYAKALAKYHAEIPSNVASAA) is activation peptide. A Peptidase A1 domain is found at 85–384 (YVTPITAGSS…DGDNLQLGFA (300 aa)). Catalysis depends on residues Asp-101 and Asp-279. Residue Asn-304 is glycosylated (N-linked (GlcNAc...) asparagine). Cys-315 and Cys-347 form a disulfide bridge.

It belongs to the peptidase A1 family. In terms of assembly, monomer.

The protein localises to the secreted. The enzyme catalyses Hydrolysis of proteins with broad specificity similar to that of pepsin A, preferring hydrophobic residues at P1 and P1', but also cleaving 20-Gly-|-Glu-21 in the B chain of insulin. Clots milk, and activates trypsinogen.. Functionally, secreted aspartic endopeptidase that allows assimilation of proteinaceous substrates. The scissile peptide bond is attacked by a nucleophilic water molecule activated by two aspartic residues in the active site. Shows a broad primary substrate specificity. Favors hydrophobic residues at the P1 and P1' positions, but can also activate trypsinogen and hydrolyze the B chain of insulin between positions 'Gly-20' and 'Glu-21'. The sequence is that of Penicillopepsin-1 (pepA) from Talaromyces stipitatus (strain ATCC 10500 / CBS 375.48 / QM 6759 / NRRL 1006) (Penicillium stipitatum).